A 153-amino-acid chain; its full sequence is Prophage Rz endopeptidase RzpD (153 aa).

Its function is as follows. Necessary for host cell lysis. It is believed to code for an endopeptidase that cleaves the amino-carboxyl cross-link between the diaminopimelic acid and D-alanine residues in the murein component of the bacterial cell wall. The sequence is that of Prophage Rz endopeptidase RzpD (rzpD) from Escherichia coli (strain K12).